The following is a 229-amino-acid chain: Lipoprotein-releasing system ATP-binding protein LolD (229 aa).

The region spanning 9-229 is the ABC transporter domain; the sequence is LRLEQVARRY…TIREGQIVPA (221 aa). 45-52 is a binding site for ATP; it reads APSGTGKS.

Belongs to the ABC transporter superfamily. Lipoprotein translocase (TC 3.A.1.125) family. The complex is composed of two ATP-binding proteins (LolD) and two transmembrane proteins (LolC and LolE).

It is found in the cell inner membrane. Its function is as follows. Part of the ABC transporter complex LolCDE involved in the translocation of mature outer membrane-directed lipoproteins, from the inner membrane to the periplasmic chaperone, LolA. Responsible for the formation of the LolA-lipoprotein complex in an ATP-dependent manner. The sequence is that of Lipoprotein-releasing system ATP-binding protein LolD from Granulibacter bethesdensis (strain ATCC BAA-1260 / CGDNIH1).